The primary structure comprises 286 residues: Aspartate/glutamate leucyltransferase (286 aa).

Belongs to the R-transferase family. Bpt subfamily.

The protein resides in the cytoplasm. The enzyme catalyses N-terminal L-glutamyl-[protein] + L-leucyl-tRNA(Leu) = N-terminal L-leucyl-L-glutamyl-[protein] + tRNA(Leu) + H(+). It carries out the reaction N-terminal L-aspartyl-[protein] + L-leucyl-tRNA(Leu) = N-terminal L-leucyl-L-aspartyl-[protein] + tRNA(Leu) + H(+). Functions in the N-end rule pathway of protein degradation where it conjugates Leu from its aminoacyl-tRNA to the N-termini of proteins containing an N-terminal aspartate or glutamate. In Jannaschia sp. (strain CCS1), this protein is Aspartate/glutamate leucyltransferase.